The sequence spans 294 residues: Elongation factor Ts, mitochondrial 2 (294 aa).

This sequence belongs to the EF-Ts family.

The protein localises to the mitochondrion. Its function is as follows. Associates with the EF-Tu.GDP complex and induces the exchange of GDP to GTP. It remains bound to the aminoacyl-tRNA.EF-Tu.GTP complex up to the GTP hydrolysis stage on the ribosome. The protein is Elongation factor Ts, mitochondrial 2 of Paramecium tetraurelia.